The sequence spans 107 residues: Sulfurtransferase Alvin_2599 (107 aa).

The 89-residue stretch at 16–104 folds into the Rhodanese domain; that stretch reads DTEDVLLVDI…WARHGLPIVA (89 aa). Catalysis depends on Cys64, which acts as the Cysteine persulfide intermediate.

As to quaternary structure, monomer.

The protein resides in the cytoplasm. The protein operates within energy metabolism; sulfur metabolism. Its function is as follows. Sulfur carrier protein involved in sulfur trafficking for oxidative dissimilatory sulfur metabolism. Component of a sulfur relay system that starts with the sulfur-mobilizing rhodanese-like protein Rhd_2599 (Alvin_2599), which transfers the sulfur from a low-molecular-weight thiol, maybe glutathione, to the TusA protein (Alvin_2600); TusA serves as the sulfur donor for DsrEFH, which persulfurates DsrC; persulfurated DsrC very probably serves as a direct substrate for reverse-acting sulfite reductase, DsrAB. Is able to catalyze the sulfur transfer reaction from thiosulfate or glutathione (GSSH) to cyanide in vitro, however, thiosulfate is unlikely an in vivo substrate. The chain is Sulfurtransferase Alvin_2599 from Allochromatium vinosum (strain ATCC 17899 / DSM 180 / NBRC 103801 / NCIMB 10441 / D) (Chromatium vinosum).